A 223-amino-acid polypeptide reads, in one-letter code: UPF0502 protein Sbal_1765 (223 aa).

The protein belongs to the UPF0502 family.

The protein is UPF0502 protein Sbal_1765 of Shewanella baltica (strain OS155 / ATCC BAA-1091).